A 267-amino-acid chain; its full sequence is Thiazole synthase (267 aa).

Lys101 serves as the catalytic Schiff-base intermediate with DXP. Residues Gly162, Ala188–Gly189, and Asn210–Thr211 contribute to the 1-deoxy-D-xylulose 5-phosphate site. The interval His247–Val267 is disordered.

Belongs to the ThiG family. In terms of assembly, homotetramer. Forms heterodimers with either ThiH or ThiS.

The protein localises to the cytoplasm. It catalyses the reaction [ThiS sulfur-carrier protein]-C-terminal-Gly-aminoethanethioate + 2-iminoacetate + 1-deoxy-D-xylulose 5-phosphate = [ThiS sulfur-carrier protein]-C-terminal Gly-Gly + 2-[(2R,5Z)-2-carboxy-4-methylthiazol-5(2H)-ylidene]ethyl phosphate + 2 H2O + H(+). It participates in cofactor biosynthesis; thiamine diphosphate biosynthesis. In terms of biological role, catalyzes the rearrangement of 1-deoxy-D-xylulose 5-phosphate (DXP) to produce the thiazole phosphate moiety of thiamine. Sulfur is provided by the thiocarboxylate moiety of the carrier protein ThiS. In vitro, sulfur can be provided by H(2)S. This Deinococcus geothermalis (strain DSM 11300 / CIP 105573 / AG-3a) protein is Thiazole synthase.